A 298-amino-acid polypeptide reads, in one-letter code: Ribosomal RNA small subunit methyltransferase H (298 aa).

Residues 31–33 (GGH), Asp-50, Tyr-80, Asp-95, and Gln-102 each bind S-adenosyl-L-methionine. The segment at 255–298 (AEKDLYGNTNKPFKSVGKAIDPDDEEKERNNRARSARLRIAERE) is disordered.

It belongs to the methyltransferase superfamily. RsmH family.

Its subcellular location is the cytoplasm. The enzyme catalyses cytidine(1402) in 16S rRNA + S-adenosyl-L-methionine = N(4)-methylcytidine(1402) in 16S rRNA + S-adenosyl-L-homocysteine + H(+). In terms of biological role, specifically methylates the N4 position of cytidine in position 1402 (C1402) of 16S rRNA. The chain is Ribosomal RNA small subunit methyltransferase H from Cytophaga hutchinsonii (strain ATCC 33406 / DSM 1761 / CIP 103989 / NBRC 15051 / NCIMB 9469 / D465).